The sequence spans 753 residues: 5-methyltetrahydropteroyltriglutamate--homocysteine methyltransferase (753 aa).

Residues 17-20 (RELK) and lysine 117 each bind 5-methyltetrahydropteroyltri-L-glutamate. Residues 431–433 (IGS) and glutamate 484 contribute to the L-homocysteine site. L-methionine contacts are provided by residues 431 to 433 (IGS) and glutamate 484. Residues 515–516 (RC) and tryptophan 561 contribute to the 5-methyltetrahydropteroyltri-L-glutamate site. L-homocysteine is bound at residue aspartate 599. Aspartate 599 provides a ligand contact to L-methionine. Glutamate 605 contributes to the 5-methyltetrahydropteroyltri-L-glutamate binding site. Zn(2+)-binding residues include histidine 641, cysteine 643, and glutamate 665. The Proton donor role is filled by histidine 694. Cysteine 726 contributes to the Zn(2+) binding site.

It belongs to the vitamin-B12 independent methionine synthase family. Zn(2+) serves as cofactor.

It carries out the reaction 5-methyltetrahydropteroyltri-L-glutamate + L-homocysteine = tetrahydropteroyltri-L-glutamate + L-methionine. It functions in the pathway amino-acid biosynthesis; L-methionine biosynthesis via de novo pathway; L-methionine from L-homocysteine (MetE route): step 1/1. Catalyzes the transfer of a methyl group from 5-methyltetrahydrofolate to homocysteine resulting in methionine formation. In Citrobacter koseri (strain ATCC BAA-895 / CDC 4225-83 / SGSC4696), this protein is 5-methyltetrahydropteroyltriglutamate--homocysteine methyltransferase.